The sequence spans 267 residues: Phosphatidylserine decarboxylase proenzyme (267 aa).

Active-site charge relay system; for autoendoproteolytic cleavage activity residues include Asp-78, His-132, and Ser-236. Ser-236 serves as the catalytic Schiff-base intermediate with substrate; via pyruvic acid; for decarboxylase activity. Ser-236 is modified (pyruvic acid (Ser); by autocatalysis).

Belongs to the phosphatidylserine decarboxylase family. PSD-B subfamily. Prokaryotic type I sub-subfamily. As to quaternary structure, heterodimer of a large membrane-associated beta subunit and a small pyruvoyl-containing alpha subunit. Requires pyruvate as cofactor. Is synthesized initially as an inactive proenzyme. Formation of the active enzyme involves a self-maturation process in which the active site pyruvoyl group is generated from an internal serine residue via an autocatalytic post-translational modification. Two non-identical subunits are generated from the proenzyme in this reaction, and the pyruvate is formed at the N-terminus of the alpha chain, which is derived from the carboxyl end of the proenzyme. The autoendoproteolytic cleavage occurs by a canonical serine protease mechanism, in which the side chain hydroxyl group of the serine supplies its oxygen atom to form the C-terminus of the beta chain, while the remainder of the serine residue undergoes an oxidative deamination to produce ammonia and the pyruvoyl prosthetic group on the alpha chain. During this reaction, the Ser that is part of the protease active site of the proenzyme becomes the pyruvoyl prosthetic group, which constitutes an essential element of the active site of the mature decarboxylase.

The protein resides in the cell membrane. It catalyses the reaction a 1,2-diacyl-sn-glycero-3-phospho-L-serine + H(+) = a 1,2-diacyl-sn-glycero-3-phosphoethanolamine + CO2. The protein operates within phospholipid metabolism; phosphatidylethanolamine biosynthesis; phosphatidylethanolamine from CDP-diacylglycerol: step 2/2. In terms of biological role, catalyzes the formation of phosphatidylethanolamine (PtdEtn) from phosphatidylserine (PtdSer). The polypeptide is Phosphatidylserine decarboxylase proenzyme (Helicobacter pylori (strain J99 / ATCC 700824) (Campylobacter pylori J99)).